The primary structure comprises 289 residues: 4-diphosphocytidyl-2-C-methyl-D-erythritol kinase (289 aa).

Residue lysine 15 is part of the active site. 100 to 110 (PVSAGLAGGSA) is an ATP binding site. Residue aspartate 140 is part of the active site.

Belongs to the GHMP kinase family. IspE subfamily.

The catalysed reaction is 4-CDP-2-C-methyl-D-erythritol + ATP = 4-CDP-2-C-methyl-D-erythritol 2-phosphate + ADP + H(+). It functions in the pathway isoprenoid biosynthesis; isopentenyl diphosphate biosynthesis via DXP pathway; isopentenyl diphosphate from 1-deoxy-D-xylulose 5-phosphate: step 3/6. In terms of biological role, catalyzes the phosphorylation of the position 2 hydroxy group of 4-diphosphocytidyl-2C-methyl-D-erythritol. The sequence is that of 4-diphosphocytidyl-2-C-methyl-D-erythritol kinase from Anaplasma marginale (strain Florida).